The chain runs to 85 residues: YcgL domain-containing protein PC1_1941 (85 aa).

The YcgL domain maps to 1–85; it reads MFCVIYRSAK…PVENLLNTPV (85 aa).

In Pectobacterium carotovorum subsp. carotovorum (strain PC1), this protein is YcgL domain-containing protein PC1_1941.